A 301-amino-acid chain; its full sequence is MPIIIDKDLPARKVLQKENIFVMTKERAVTQDIRALKIAILNLMPTKQETEAQLLRLIGNTPLQLDVHLLHMESHLSRNVAQDHLTSFYKTFRDIEDEKFDGLIITGAPVETLSFEEVDYWEELGRIMEYSKTNVTSTLHICWGAQAGLYYHYGVPKYPLAEKMFGVFEHEVREQHVKLLQGFDEVFFAPHSRHTEVRESDIEKVKELTLLANSEEAGVHLAIGQEGRQVFALGHSEYSCDTLKQEYERDCQRGLNIDVPKNYFKHNNPNEKPIVRWRSHGNLLFSNWLNYYVYQETPYIL.

Cysteine 142 acts as the Acyl-thioester intermediate in catalysis. Substrate-binding residues include lysine 163 and serine 192. Histidine 235 serves as the catalytic Proton acceptor. Glutamate 237 is a catalytic residue. A substrate-binding site is contributed by arginine 249.

It belongs to the MetA family.

It localises to the cytoplasm. It catalyses the reaction L-homoserine + acetyl-CoA = O-acetyl-L-homoserine + CoA. It functions in the pathway amino-acid biosynthesis; L-methionine biosynthesis via de novo pathway; O-acetyl-L-homoserine from L-homoserine: step 1/1. In terms of biological role, transfers an acetyl group from acetyl-CoA to L-homoserine, forming acetyl-L-homoserine. In Bacillus mycoides (strain KBAB4) (Bacillus weihenstephanensis), this protein is Homoserine O-acetyltransferase.